Reading from the N-terminus, the 426-residue chain is MKLQKPKGTQDILPGDSAKWQYVENVARETFKKYNYGEIRTPMFEHYEVISRSVGDTTDIVTKEMYDFHDKGDRHITLRPEGTAPVVRSYVENKLFAPEVQKPVKVYYIGSMFRYERPQAGRLREFHQLGVECFGSKNPATDVETIAMAYQLFNTLGIKDVTLHLNSLGNTDSRLAYRQALIDYLTPMRESLSKDSQRRLEENPLRVLDSKEKEDKVAVENAPSILDYLDEESQTHFDEVRAMLDSLNIPYVIDTNMVRGLDYYNHTIFEFITTIDKSELTICAGGRYDSLVEYFGGPETAGFGFGLGLERLLLVLDKQGIKLPVEESLDVYIAVLGSGANGKALELVQSIRYQGFKAERDYLGRKIKAQFKSADTFKAKTVITLGESEVESGVVKVKNNATREEVTVSFEELTTNFATVLKQLEK.

The protein belongs to the class-II aminoacyl-tRNA synthetase family. In terms of assembly, homodimer.

It is found in the cytoplasm. It carries out the reaction tRNA(His) + L-histidine + ATP = L-histidyl-tRNA(His) + AMP + diphosphate + H(+). This Streptococcus thermophilus (strain ATCC BAA-491 / LMD-9) protein is Histidine--tRNA ligase.